Here is a 73-residue protein sequence, read N- to C-terminus: Translation initiation factor IF-1 (73 aa).

The S1-like domain occupies 1 to 73; the sequence is MGKKEEAFEV…TKGRIVYRER (73 aa).

The protein belongs to the IF-1 family. In terms of assembly, component of the 30S ribosomal translation pre-initiation complex which assembles on the 30S ribosome in the order IF-2 and IF-3, IF-1 and N-formylmethionyl-tRNA(fMet); mRNA recruitment can occur at any time during PIC assembly.

The protein resides in the cytoplasm. In terms of biological role, one of the essential components for the initiation of protein synthesis. Stabilizes the binding of IF-2 and IF-3 on the 30S subunit to which N-formylmethionyl-tRNA(fMet) subsequently binds. Helps modulate mRNA selection, yielding the 30S pre-initiation complex (PIC). Upon addition of the 50S ribosomal subunit IF-1, IF-2 and IF-3 are released leaving the mature 70S translation initiation complex. In Rhodopirellula baltica (strain DSM 10527 / NCIMB 13988 / SH1), this protein is Translation initiation factor IF-1.